Consider the following 636-residue polypeptide: MTEVKQYPGRDYDVIVVGAGHAGSEAALAAARMGNRTLLMTINLDMVAFMPCNPSVGGPAKGIVVREIDALGGEMGRNIDKTYVQMRMLNTGKGPAVRALRAQADKHAYHAEMKHTIEREPNLTLRQGIVDGLIVEDGVCKGVITNTGARYSAKSVVLTTGTAARGKIIIGELMYSSGPNNSQPAMKLSGDLERLGFNLERFKTGTPPRVDGNTIDYSVTEEQPGDPEPHHFSFETKDADYIDLKHQLSCWLTYTNETTHKIIRENLDRAPMFTGVIEGVGPRYCPSIEDKIVRFADKKRHQLFLEPEGRNTDEWYVQGLSTSMPEEVQQRILHSIKGLEDAEMMRPGYAIEYDVVAPYQLKATLETKLVKNLYTAGQTNGTSGYEEAAGQGLIAGINAGLRALDRGQFTLKRSDAYIGVMIDDLVTKGTNEPYRLLTSRAEYRLILRHDNADLRLTDKGRELGLIDDERYAAFEAKRQAIKNELDRLGKIRIKPNDEVNAFLRAHNSGELKDGVLAADFLKRPEVQYADLMKFIPAAPEPLERHVIEQVEIQIKYAGYIQKAEERVDRLKKMEAKKIPDRIDYDAIDGLATEAHQKLKKIQPTTIAQASRISGVNPADIAILSVYIQQGRIAKVQ.

Residue 18–23 (GAGHAG) participates in FAD binding. NAD(+) is bound at residue 281 to 295 (GPRYCPSIEDKIVRF).

The protein belongs to the MnmG family. In terms of assembly, homodimer. Heterotetramer of two MnmE and two MnmG subunits. It depends on FAD as a cofactor.

It is found in the cytoplasm. NAD-binding protein involved in the addition of a carboxymethylaminomethyl (cmnm) group at the wobble position (U34) of certain tRNAs, forming tRNA-cmnm(5)s(2)U34. This Lactiplantibacillus plantarum (strain ATCC BAA-793 / NCIMB 8826 / WCFS1) (Lactobacillus plantarum) protein is tRNA uridine 5-carboxymethylaminomethyl modification enzyme MnmG.